A 146-amino-acid polypeptide reads, in one-letter code: uncharacterized protein (146 aa).

5 helical membrane passes run 5-27, 32-49, 61-80, 90-108, and 120-142; these read GAMV…YGLA, FVYV…YIIL, LAVM…FFSG, SLGL…ARVF, and FFLK…MLFL.

It is found in the cell membrane. This is an uncharacterized protein from Archaeoglobus fulgidus (strain ATCC 49558 / DSM 4304 / JCM 9628 / NBRC 100126 / VC-16).